A 436-amino-acid chain; its full sequence is 3-ketoacyl-CoA thiolase (436 aa).

Residue C99 is the Acyl-thioester intermediate of the active site. Catalysis depends on proton acceptor residues H392 and C422.

This sequence belongs to the thiolase-like superfamily. Thiolase family. Heterotetramer of two alpha chains (FadJ) and two beta chains (FadI).

The protein localises to the cytoplasm. The catalysed reaction is an acyl-CoA + acetyl-CoA = a 3-oxoacyl-CoA + CoA. It participates in lipid metabolism; fatty acid beta-oxidation. Its function is as follows. Catalyzes the final step of fatty acid oxidation in which acetyl-CoA is released and the CoA ester of a fatty acid two carbons shorter is formed. This chain is 3-ketoacyl-CoA thiolase, found in Shewanella loihica (strain ATCC BAA-1088 / PV-4).